Reading from the N-terminus, the 142-residue chain is MGQGKFAARKLKRDSARFRWSDPHFARTAGGLKLKSDPLEGAPQGRGIVLEKIGVEAKQPNSAIRKCVRVQLIKNGRQVSAFAVGDGAINFIDEHDEVEIEGIGGRLGRSMGDIPGVRFVVTKVNNVCLHELVIGRKEKPRR.

Belongs to the universal ribosomal protein uS12 family. In terms of assembly, part of the 30S ribosomal subunit.

With S4 and S5 plays an important role in translational accuracy. Located at the interface of the 30S and 50S subunits. The chain is Small ribosomal subunit protein uS12 from Methanospirillum hungatei JF-1 (strain ATCC 27890 / DSM 864 / NBRC 100397 / JF-1).